The following is a 517-amino-acid chain: ATP synthase subunit alpha 2 (517 aa).

173 to 180 (GDRQTGKT) serves as a coordination point for ATP.

The protein belongs to the ATPase alpha/beta chains family. F-type ATPases have 2 components, CF(1) - the catalytic core - and CF(0) - the membrane proton channel. CF(1) has five subunits: alpha(3), beta(3), gamma(1), delta(1), epsilon(1). CF(0) has three main subunits: a(1), b(2) and c(9-12). The alpha and beta chains form an alternating ring which encloses part of the gamma chain. CF(1) is attached to CF(0) by a central stalk formed by the gamma and epsilon chains, while a peripheral stalk is formed by the delta and b chains.

It localises to the cell inner membrane. It catalyses the reaction ATP + H2O + 4 H(+)(in) = ADP + phosphate + 5 H(+)(out). Functionally, produces ATP from ADP in the presence of a proton gradient across the membrane. The alpha chain is a regulatory subunit. The chain is ATP synthase subunit alpha 2 from Legionella pneumophila subsp. pneumophila (strain Philadelphia 1 / ATCC 33152 / DSM 7513).